Consider the following 77-residue polypeptide: Putative defensin-like protein 118 (77 aa).

The N-terminal stretch at methionine 1 to glycine 25 is a signal peptide. Cystine bridges form between cysteine 29/cysteine 75, cysteine 39/cysteine 58, cysteine 44/cysteine 69, and cysteine 48/cysteine 71.

The protein belongs to the DEFL family.

Its subcellular location is the secreted. This Arabidopsis thaliana (Mouse-ear cress) protein is Putative defensin-like protein 118 (LCR52).